We begin with the raw amino-acid sequence, 782 residues long: Nucleolar RNA helicase 2 (782 aa).

The segment at 1–184 (MPGKLRSASK…IPVEQKEGAF (184 aa)) is disordered. A phosphoserine mark is found at S7 and S13. Composition is skewed to basic and acidic residues over residues 26 to 42 (PSEKKTRKEKPKSKTDE) and 99 to 117 (EPLEKKAPSAKTKEMKAEE). Residue K39 is modified to N6-acetyllysine. K114 participates in a covalent cross-link: Glycyl lysine isopeptide (Lys-Gly) (interchain with G-Cter in SUMO1); alternate. K114 participates in a covalent cross-link: Glycyl lysine isopeptide (Lys-Gly) (interchain with G-Cter in SUMO2); alternate. The residue at position 119 (S119) is a Phosphoserine. Basic and acidic residues predominate over residues 134–143 (GKEANGDVGE). An N6-acetyllysine modification is found at K135. Residues S145 and S169 each carry the phosphoserine modification. The span at 172-181 (EKEIPVEQKE) shows a compositional bias: basic and acidic residues. The Q motif motif lies at 182–210 (GAFSNFPISEETVKLLKARGVNFLFPIQA). One can recognise a Helicase ATP-binding domain in the interval 213 to 392 (FHHVYSGKDL…KKYMKSTYEQ (180 aa)). 226-233 (ARTGTGKT) serves as a coordination point for ATP. T292 carries the post-translational modification Phosphothreonine. A DEAD box motif is present at residues 335–338 (DEVD). The Helicase C-terminal domain occupies 425–569 (DVIRVYSGHQ…GVPSATEIIK (145 aa)). S563 carries the phosphoserine modification. Position 596 is an N6-acetyllysine (K596). Residues 704-782 (ATEQPELEGP…KRSFSKAFGQ (79 aa)) form a disordered region. Tandem repeats lie at residues 720–724 (GRGQR), 731–735 (FRGQR), and 741–747 (FRGQGQR). The interval 720 to 747 (GRGQRDGSRGSFRGQRGGSRNFRGQGQR) is 3 X 5 AA repeats. Over residues 728–756 (RGSFRGQRGGSRNFRGQGQRGGSRNFRGQ) the composition is skewed to low complexity. An N6-acetyllysine modification is found at K778.

It belongs to the DEAD box helicase family. DDX21/DDX50 subfamily. As to quaternary structure, homodimer; homodimerizes via its N-terminus. Found in a multi-helicase-TICAM1 complex at least composed of DHX36, DDX1, DDX21 and TICAM1; this complex exists in resting cells with or without poly(I:C) RNA ligand stimulation. Interacts (via C-terminus) with TICAM1 (via TIR domain). Interacts with DHX36 (via C-terminus); this interaction serves as bridges to TICAM1. Interacts (via C-terminus) with DDX1 (via B30.2/SPRY domain); this interaction serves as bridges to TICAM1. Component of the B-WICH complex, at least composed of SMARCA5/SNF2H, BAZ1B/WSTF, SF3B1, DEK, MYO1C, ERCC6, MYBBP1A and DDX21. Interacts with C1QBP. Interacts with JUN. Interacts with WDR46. Interacts with MCM3AP. Interacts with WDR43. Interacts with KPNA3. Interacts with GID4. Post-translationally, acetylation by CREBBP/CBP inhibits the helicase activity. Deacetylation by SIRT7 promotes the helicase activity and overcomes R-loop-mediated stalling of RNA polymerases.

The protein resides in the nucleus. It localises to the nucleolus. Its subcellular location is the nucleoplasm. It is found in the cytoplasm. The protein localises to the cytosol. The protein resides in the mitochondrion. It catalyses the reaction ATP + H2O = ADP + phosphate + H(+). Acetylation inhibits the helicase activity. RNA helicase that acts as a sensor of the transcriptional status of both RNA polymerase (Pol) I and II: promotes ribosomal RNA (rRNA) processing and transcription from polymerase II (Pol II). Binds various RNAs, such as rRNAs, snoRNAs, 7SK and, at lower extent, mRNAs. In the nucleolus, localizes to rDNA locus, where it directly binds rRNAs and snoRNAs, and promotes rRNA transcription, processing and modification. Required for rRNA 2'-O-methylation, possibly by promoting the recruitment of late-acting snoRNAs SNORD56 and SNORD58 with pre-ribosomal complexes. In the nucleoplasm, binds 7SK RNA and is recruited to the promoters of Pol II-transcribed genes: acts by facilitating the release of P-TEFb from inhibitory 7SK snRNP in a manner that is dependent on its helicase activity, thereby promoting transcription of its target genes. Functions as a cofactor for JUN-activated transcription: required for phosphorylation of JUN at 'Ser-77'. Can unwind double-stranded RNA (helicase) and can fold or introduce a secondary structure to a single-stranded RNA (foldase). Together with SIRT7, required to prevent R-loop-associated DNA damage and transcription-associated genomic instability: deacetylation by SIRT7 activates the helicase activity, thereby overcoming R-loop-mediated stalling of RNA polymerases. Involved in rRNA processing. May bind to specific miRNA hairpins. Component of a multi-helicase-TICAM1 complex that acts as a cytoplasmic sensor of viral double-stranded RNA (dsRNA) and plays a role in the activation of a cascade of antiviral responses including the induction of pro-inflammatory cytokines via the adapter molecule TICAM1. The chain is Nucleolar RNA helicase 2 (Ddx21) from Rattus norvegicus (Rat).